Consider the following 615-residue polypeptide: Dihydroxy-acid dehydratase (615 aa).

Residue Asp-81 participates in Mg(2+) binding. [2Fe-2S] cluster is bound at residue Cys-122. Mg(2+) contacts are provided by Asp-123 and Lys-124. An N6-carboxylysine modification is found at Lys-124. Residue Cys-195 coordinates [2Fe-2S] cluster. Residue Glu-491 coordinates Mg(2+). Catalysis depends on Ser-517, which acts as the Proton acceptor.

Belongs to the IlvD/Edd family. As to quaternary structure, homodimer. [2Fe-2S] cluster is required as a cofactor. Mg(2+) serves as cofactor.

It catalyses the reaction (2R)-2,3-dihydroxy-3-methylbutanoate = 3-methyl-2-oxobutanoate + H2O. The catalysed reaction is (2R,3R)-2,3-dihydroxy-3-methylpentanoate = (S)-3-methyl-2-oxopentanoate + H2O. It functions in the pathway amino-acid biosynthesis; L-isoleucine biosynthesis; L-isoleucine from 2-oxobutanoate: step 3/4. The protein operates within amino-acid biosynthesis; L-valine biosynthesis; L-valine from pyruvate: step 3/4. In terms of biological role, functions in the biosynthesis of branched-chain amino acids. Catalyzes the dehydration of (2R,3R)-2,3-dihydroxy-3-methylpentanoate (2,3-dihydroxy-3-methylvalerate) into 2-oxo-3-methylpentanoate (2-oxo-3-methylvalerate) and of (2R)-2,3-dihydroxy-3-methylbutanoate (2,3-dihydroxyisovalerate) into 2-oxo-3-methylbutanoate (2-oxoisovalerate), the penultimate precursor to L-isoleucine and L-valine, respectively. In Shewanella pealeana (strain ATCC 700345 / ANG-SQ1), this protein is Dihydroxy-acid dehydratase.